We begin with the raw amino-acid sequence, 133 residues long: UPF0344 protein SE_0666 (133 aa).

The next 4 helical transmembrane spans lie at Met1 to Leu21, Leu42 to Ala62, Met71 to Ile91, and Phe103 to Trp123.

Belongs to the UPF0344 family.

It is found in the cell membrane. This is UPF0344 protein SE_0666 from Staphylococcus epidermidis (strain ATCC 12228 / FDA PCI 1200).